A 528-amino-acid polypeptide reads, in one-letter code: GTPase Obg (528 aa).

An Obg domain is found at 2–159 (ASFVDRVVLH…SDIVLELKSI (158 aa)). Positions 160-343 (ADIALVGFPS…LGFAMAEIVQ (184 aa)) constitute an OBG-type G domain. Residues 166 to 173 (GFPSAGKS), 191 to 195 (FTTLI), 212 to 215 (DVPG), 295 to 298 (NKVD), and 324 to 326 (SAT) each bind GTP. 2 residues coordinate Mg(2+): Ser-173 and Thr-193. The OCT domain occupies 363–447 (PRAVNESGFK…DDGVVFDWEP (85 aa)). A disordered region spans residues 471-490 (DRPTRSQKRDEQIERREAKA).

It belongs to the TRAFAC class OBG-HflX-like GTPase superfamily. OBG GTPase family. Monomer. Requires Mg(2+) as cofactor.

Its subcellular location is the cytoplasm. Functionally, an essential GTPase which binds GTP, GDP and possibly (p)ppGpp with moderate affinity, with high nucleotide exchange rates and a fairly low GTP hydrolysis rate. Plays a role in control of the cell cycle, stress response, ribosome biogenesis and in those bacteria that undergo differentiation, in morphogenesis control. The protein is GTPase Obg of Paenarthrobacter aurescens (strain TC1).